Reading from the N-terminus, the 340-residue chain is Protein SSUH2 homolog (340 aa).

Acidic residues predominate over residues 1–11; that stretch reads MDRDPSEEDSM. Positions 1-20 are disordered; sequence MDRDPSEEDSMADLSFEAES.

Widely expressed, with highest levels in the liver, intestine, tongue and underjaw.

The protein resides in the cytoplasm. The protein localises to the nucleus. In terms of biological role, plays a role in odontogenesis. The sequence is that of Protein SSUH2 homolog from Mus musculus (Mouse).